The chain runs to 101 residues: NADH-quinone oxidoreductase subunit K (101 aa).

3 consecutive transmembrane segments (helical) span residues 5–25 (PNWY…GVLF), 30–50 (IVVL…LVTF), and 62–82 (LVFF…AIVI).

It belongs to the complex I subunit 4L family. In terms of assembly, NDH-1 is composed of 14 different subunits. Subunits NuoA, H, J, K, L, M, N constitute the membrane sector of the complex.

Its subcellular location is the cell inner membrane. The enzyme catalyses a quinone + NADH + 5 H(+)(in) = a quinol + NAD(+) + 4 H(+)(out). NDH-1 shuttles electrons from NADH, via FMN and iron-sulfur (Fe-S) centers, to quinones in the respiratory chain. The immediate electron acceptor for the enzyme in this species is believed to be a menaquinone. Couples the redox reaction to proton translocation (for every two electrons transferred, four hydrogen ions are translocated across the cytoplasmic membrane), and thus conserves the redox energy in a proton gradient. This is NADH-quinone oxidoreductase subunit K from Salinibacter ruber (strain DSM 13855 / M31).